Reading from the N-terminus, the 218-residue chain is Ras-related protein YPT3 (218 aa).

A GTP-binding site is contributed by 20–27 (GDSGVGKS). The Effector region signature appears at 42 to 50 (SKSTIGVEF). GTP is bound by residues 68–72 (DTAGQ) and 126–129 (NKSD). Residues 186-205 (GDEGATSSAPPKGETINIKD) are disordered. S-geranylgeranyl cysteine attachment occurs at residues C215 and C216.

The protein belongs to the small GTPase superfamily. Rab family. Its expression is weak in leaves, higher in stems and roots, but highest in petals, stigma and stamens.

The protein resides in the cell membrane. Its function is as follows. Protein transport. Probably involved in vesicular traffic. In Nicotiana plumbaginifolia (Leadwort-leaved tobacco), this protein is Ras-related protein YPT3 (YPT3).